We begin with the raw amino-acid sequence, 86 residues long: Allergen Api g 5 (86 aa).

Asparagine 62 is a glycosylation site (N-linked (GlcNAc...) asparagine).

This sequence belongs to the oxygen-dependent FAD-linked oxidoreductase family. FAD serves as cofactor. Post-translationally, carries MUXF and MMXF, two complex N-linked glycans with alpha-1,3-fucose and beta-1,2-xylose residues in their structures. MMXF is added to Asn-62.

The chain is Allergen Api g 5 from Apium graveolens (Celery).